A 42-amino-acid polypeptide reads, in one-letter code: Delta-hexatoxin-Hv1a (42 aa).

Cystine bridges form between C1–C15, C8–C20, C14–C31, and C16–C42.

Belongs to the neurotoxin 06 (delta-actx) family. As to expression, expressed by the venom gland.

It localises to the secreted. Its function is as follows. Inhibits tetrodotoxin-sensitive voltage-gated sodium channels (Nav) by binding to site 3. Slows the inactivation, and causes a prolongation of action potential duration resulting in repetitive firing in autonomic and motor nerve fibers. Does not depolarize the resting potential. Does not affect tetrodotoxin-resistant sodium channels. This lethal neurotoxin is active on both insect and mammalian voltage-gated sodium channels. Pan-neuronal expression in Drosophila is lethal but flies engineered to express the toxin only in pacemaker neurons have profound defects in circadian rhythm but a normal lifespan. This is Delta-hexatoxin-Hv1a from Hadronyche versuta (Blue mountains funnel-web spider).